A 916-amino-acid chain; its full sequence is MPKKSDTTRKLEDVGIEIDGDVDSAEEDKKSKGKGGKKAAGGKRGKASEDGEDEDEDDKPPKGRRAANKKKPAPVDEEDSDDDIPQRRSAGNRRRGNVRERGDGDKKKSGKKGRRGGKKNEKGKGKDSDKDSDKDEKKKKNSSGDESDSDEEDESMSEGEMAKLMEEVEEKKKLIANIRNKPWRMRRRLKVLKEAQQFVDKFEGALGKGKGRKLYAYKVMMMKKWIKFKRDFENFRTACIPWERKIKEVESHFGSSVASYFIFLRWMYGMNLVLFSLTFGLVVIPEVLMGLPYGSIPRKTVPREDQDTAMDYSVLTDFNGYCKYSVLFYGYYNNQRTIGFLKFRLPLSYLMVGIGTFGYSLMVVIRTMAKNADVGGGDGEDNEFTFAWKMFTSWDYLIGNAETADNKYASITTSFKESIVDEQENQKDENIHLRRFLRVLANFLITCTLGGSGYLIYFVVKRSQEFQNMDNLSWYEKNELEIIMSLLGLVGPMLFETIAELEEYHPRIALKWQLGRIFALFLGNLYTFLLALFDEVNAKLEEEESIKNASIWFLKEYYANYTANNPNDTGTPPPINPADAIRGPCWETTVGVEFVKLTISDIQVTYLTILIGDFLRAFIVRFLNYCWCWDLEAGWPSYGEFDISGNVLGLVFNQGMIWMGAFYAPGLVGINVLRLLSSMYYQCWAVMACNVPHERVFKASKSNNFYMGLLLLILFLSLLPVVYTIMSLPPSFDCGPFSGKERMFDVVMETIDLDLPAFMGTLFGYVANPGLVISAVLLMVLAIYYLNSVSEAYKNSNNELKKKMQMARDEEKNRRNNKDSTNQVMKDLEDLLPNRPPTPPSPRENIAEKNQGQGGKSAKVKPGTAGGVHLQKDVSLASANPNARGPVTRAPGPRGPGPLPGQPGAGRGQGPPPRRQ.

Positions 1-13 (MPKKSDTTRKLED) are enriched in basic and acidic residues. A disordered region spans residues 1–159 (MPKKSDTTRK…DEEDESMSEG (159 aa)). The Cytoplasmic segment spans residues 1–271 (MPKKSDTTRK…IFLRWMYGMN (271 aa)). Residues 14–26 (VGIEIDGDVDSAE) show a composition bias toward acidic residues. Composition is skewed to basic residues over residues 31 to 45 (SKGK…GKRG) and 62 to 72 (KGRRAANKKKP). The span at 97–107 (NVRERGDGDKK) shows a compositional bias: basic and acidic residues. Positions 108–117 (KSGKKGRRGG) are enriched in basic residues. Residues 118-138 (KKNEKGKGKDSDKDSDKDEKK) show a composition bias toward basic and acidic residues. A compositionally biased stretch (acidic residues) spans 145–157 (DESDSDEEDESMS). Residues 272 to 292 (LVLFSLTFGLVVIPEVLMGLP) form a helical membrane-spanning segment. Residues 293–344 (YGSIPRKTVPREDQDTAMDYSVLTDFNGYCKYSVLFYGYYNNQRTIGFLKFR) lie on the Extracellular side of the membrane. Residues 345-365 (LPLSYLMVGIGTFGYSLMVVI) form a helical membrane-spanning segment. Residues 366-438 (RTMAKNADVG…ENIHLRRFLR (73 aa)) are Cytoplasmic-facing. A helical transmembrane segment spans residues 439–459 (VLANFLITCTLGGSGYLIYFV). The Extracellular portion of the chain corresponds to 460 to 478 (VKRSQEFQNMDNLSWYEKN). Residues 479–499 (ELEIIMSLLGLVGPMLFETIA) form a helical membrane-spanning segment. Topologically, residues 500–516 (ELEEYHPRIALKWQLGR) are cytoplasmic. Residues 517–537 (IFALFLGNLYTFLLALFDEVN) traverse the membrane as a helical segment. Over 538–649 (AKLEEEESIK…EFDISGNVLG (112 aa)) the chain is Extracellular. A helical membrane pass occupies residues 650-670 (LVFNQGMIWMGAFYAPGLVGI). Over 671–704 (NVLRLLSSMYYQCWAVMACNVPHERVFKASKSNN) the chain is Cytoplasmic. The chain crosses the membrane as a helical span at residues 705-725 (FYMGLLLLILFLSLLPVVYTI). Topologically, residues 726 to 762 (MSLPPSFDCGPFSGKERMFDVVMETIDLDLPAFMGTL) are extracellular. A helical membrane pass occupies residues 763 to 783 (FGYVANPGLVISAVLLMVLAI). The Cytoplasmic portion of the chain corresponds to 784–916 (YYLNSVSEAY…RGQGPPPRRQ (133 aa)). Basic and acidic residues predominate over residues 804-818 (MQMARDEEKNRRNNK). The disordered stretch occupies residues 804-916 (MQMARDEEKN…RGQGPPPRRQ (113 aa)). Residues 883–892 (ARGPVTRAPG) are compositionally biased toward low complexity.

The protein belongs to the TMC family. Interacts (via N-terminus) with both isoforms CD1 and CD3 of PCDH15A (via cytoplasmic domain); this interaction is required for mechanotransduction of the hair cells and correct localization of PCDH15A in hair bundles of the hair cells. In terms of tissue distribution, in adults, expression is restricted to the hair cells of inner ear and lateral line organ. Expressed at higher levels in the larval inner ear than in the lateral-line neuromasts.

The protein localises to the cell membrane. The enzyme catalyses Ca(2+)(in) = Ca(2+)(out). Functionally, pore-forming subunit of the mechanotransducer (MET) non-selective cation channel complex located at tips of hair-cell stereocilia. Highly permeable to calcium and likely transports monovalent cations. This Danio rerio (Zebrafish) protein is Transmembrane channel-like protein 2-A.